We begin with the raw amino-acid sequence, 824 residues long: MCEVILWSSAQMASFPDSDLQTCPLCKELCGCSAPISSNSSTSSSSSQTSNSSSTSSTRRLHVLPCLHAFCRQCLEGQRSPGDPLKLRCPTCDQKVSLSESGVDALPSSNFLFSNLLDVVVSAEEQGKNGRSSAVVHHGGLLRPQHLSDPQCSSCDEGNPATSHCLDCQEYLCDNCVRAHQRVRLTKDHFIEGLLESLHLANRTNNSNTPVSISQSFHNSFSMLNVFQERMDFCQHHDDAVLRFFCDSCTVPICRECSLGRHAGHSFTYLQDALQDSRALTIQLLADAQQGRQAIQLSIEKAQAIAEQVELKAKVVQSEVKTITLRHKKALEERECELLWKVEKIRQVKAKSLYLQVEKLHQNLTKLDSTIATVTQVLEEGRSIDVLLAREHMLNQLQELKSLRCILQPQEDDRIMFTPPDQALLIAIKSLGLISSGAFATASKAHGEGIKRALQGKPASFTVVGYDHDGEPRLSGGDSVSVVLMSPDGNLSSAEVSDHQDGTYTVSYLPKGEGEHLLSVLICNQHIEGSPFKVMVKSGRSYGGVGLPMASFGGEGDGDGQLCRPWGICVDKEGYVVVADRSNNRVQIFKPCGTFHHKFGTLGSRPGQFDRPAGVACDSQRRIIVADKDNHRIQIFTFDGQFLLKFGEKGTKNGQFNYPWDVAVNFEGKILVSDTRNHRVQLFGPDGTFLNKYGFEGALWKHFDSPRGVAFNQEGHLVVTDFNNHRLLVIRPDCQSARFLGSEGTGNGQFLRPQGVAVDQEDRIIVADSRNHRIQVFEPNGNFLCKFGTHGNGFGQMDRPSGIAVTPDGVIVAVDFGNNRILMF.

The RING-type zinc-finger motif lies at 23–93; that stretch reads CPLCKELCGC…PLKLRCPTCD (71 aa). A disordered region spans residues 37-56; it reads SSNSSTSSSSSQTSNSSSTS. The B box-type 1; atypical zinc-finger motif lies at 147-194; the sequence is LSDPQCSSCDEGNPATSHCLDCQEYLCDNCVRAHQRVRLTKDHFIEGL. Zn(2+)-binding residues include Cys152, Cys155, Cys176, His180, Cys234, His237, Cys257, and His262. Residues 229-270 form a B box-type 2 zinc finger; the sequence is ERMDFCQHHDDAVLRFFCDSCTVPICRECSLGRHAGHSFTYL. Residues 293-321 are a coiled coil; the sequence is QAIQLSIEKAQAIAEQVELKAKVVQSEVK. A Filamin repeat occupies 435–536; sequence SSGAFATASK…IEGSPFKVMV (102 aa). NHL repeat units lie at residues 549 to 592, 596 to 639, 643 to 686, 690 to 733, 737 to 780, and 784 to 824; these read MASF…FKPC, HHKF…FTFD, LLKF…FGPD, LNKY…IRPD, ARFL…FEPN, and LCKF…ILMF.

The protein belongs to the TRIM/RBCC family.

Its subcellular location is the cytoplasm. The protein localises to the P-body. The enzyme catalyses S-ubiquitinyl-[E2 ubiquitin-conjugating enzyme]-L-cysteine + [acceptor protein]-L-lysine = [E2 ubiquitin-conjugating enzyme]-L-cysteine + N(6)-ubiquitinyl-[acceptor protein]-L-lysine.. The protein operates within protein modification; protein ubiquitination. E3 ubiquitin-protein ligase that cooperates with the microRNAs (miRNAs) machinery and promotes embryonic stem cells proliferation and maintenance. Binds to miRNAs and participates in post-transcriptional repression of transcripts. Required to maintain proliferation and prevent premature differentiation of neural progenitor cells during early neural development. The polypeptide is E3 ubiquitin-protein ligase TRIM71 (trim71) (Danio rerio (Zebrafish)).